We begin with the raw amino-acid sequence, 500 residues long: 7-alpha-hydroxycholest-4-en-3-one 12-alpha-hydroxylase (500 aa).

A helical membrane pass occupies residues 2-21; sequence VLWGLLGALLMVMVGWLCLP. Residue Ser325 is modified to Phosphoserine. Cys439 serves as a coordination point for heme.

Belongs to the cytochrome P450 family. Heme serves as cofactor. As to expression, liver (at protein level).

The protein resides in the endoplasmic reticulum membrane. It localises to the microsome membrane. It carries out the reaction 7alpha-hydroxycholest-4-en-3-one + reduced [NADPH--hemoprotein reductase] + O2 = 7alpha,12alpha-dihydroxycholest-4-en-3-one + oxidized [NADPH--hemoprotein reductase] + H2O + H(+). The catalysed reaction is 5beta-cholestane-3alpha,7alpha-diol + reduced [NADPH--hemoprotein reductase] + O2 = 5beta-cholestane-3alpha,7alpha,12alpha-triol + oxidized [NADPH--hemoprotein reductase] + H2O + H(+). It catalyses the reaction chenodeoxycholate + reduced [NADPH--hemoprotein reductase] + O2 = cholate + oxidized [NADPH--hemoprotein reductase] + H2O + H(+). The protein operates within lipid metabolism; bile acid biosynthesis. With respect to regulation, up-regulated upon treatment with streptozotocin. A cytochrome P450 monooxygenase involved in primary bile acid biosynthesis. Catalyzes the 12alpha-hydroxylation of 7alpha-hydroxy-4-cholesten-3-one, an intermediate metabolite in cholic acid biosynthesis. Controls biliary balance of cholic acid and chenodeoxycholic acid, ultimately regulating the intestinal absorption of dietary lipids. Mechanistically, uses molecular oxygen inserting one oxygen atom into a substrate, and reducing the second into a water molecule, with two electrons provided by NADPH via cytochrome P450 reductase (CPR; NADPH--hemoprotein reductase). This is 7-alpha-hydroxycholest-4-en-3-one 12-alpha-hydroxylase (CYP8B1) from Oryctolagus cuniculus (Rabbit).